Consider the following 336-residue polypeptide: Probable allantoicase (336 aa).

This sequence belongs to the allantoicase family.

It carries out the reaction allantoate + H2O = (S)-ureidoglycolate + urea. It functions in the pathway nitrogen metabolism; (S)-allantoin degradation; (S)-ureidoglycolate from allantoate (aminidohydrolase route): step 1/1. The protein is Probable allantoicase of Ralstonia nicotianae (strain ATCC BAA-1114 / GMI1000) (Ralstonia solanacearum).